The following is a 557-amino-acid chain: MSDPEMGWVPEPPTMTLGASRVELRVSCHGLLDRDTLTKPHPCVLLKLYSDEQWVEVERTEVLRSCSSPVFSRVLALEYFFEEKQPLQFHVFDAEDGATSPRNDTFLGSTECTLGQIVSQTKVTKPLLLKNGKTAGKSTITIVAEEVSGTNDYVQLTFRAYKLDNKDPFSKSDPFMEIYKTNEDQSDQLVWRTEVVKNNLNPSWEPFRLSLHSLCSCDVHRPLKFLVYDYDSSGKHDFIGEFTSTFQEMQEGTANPGQEMQWDCINPKYRDKKKNYKSSGTVVLAQCTVEKVHTFLDYIMGGCQISFTVAIDFTASNGDPRSSQSLHCLSPRQPNHYLQALRAVGGICQDYDSDKRFPAFGFGARIPPNFEVSHDFAINFDPENPECEEISGVIASYRRCLPQIQLYGPTNVAPIINRVAEPAQREQSTGQATKYSVLLVLTDGVVSDMAETRTAIVRASRLPMSIIIVGVGNADFSDMRLLDGDDGPLRCPRGVPAARDIVQFVPFRDFKDAAPSALAKRVLAEVPRQVVEYYASQGISPGAPRPCTLATTPSPSP.

C2 domains follow at residues 2–127 (SDPE…TKPL) and 134–263 (TAGK…MQWD). Positions 167, 173, 229, 231, and 237 each coordinate Ca(2+). A linker region region spans residues 244 to 303 (STFQEMQEGTANPGQEMQWDCINPKYRDKKKNYKSSGTVVLAQCTVEKVHTFLDYIMGGC). One can recognise a VWFA domain in the interval 306–526 (SFTVAIDFTA…ALAKRVLAEV (221 aa)).

Belongs to the copine family. Interacts (via second C2 domain) with OS9 (via C-terminus); this interaction occurs in a calcium-dependent manner in vitro. May interact with NECAB1. Ca(2+) is required as a cofactor.

The protein localises to the cytoplasm. Its subcellular location is the cell membrane. The protein resides in the endosome. It is found in the cytoplasmic vesicle. It localises to the clathrin-coated vesicle. The protein localises to the perikaryon. Its subcellular location is the cell projection. The protein resides in the dendrite. Functionally, calcium-dependent phospholipid-binding protein that plays a role in calcium-mediated intracellular processes. Binds phospholipid membranes in a calcium-dependent manner. Plays a role in dendrite formation by melanocytes. In Pongo abelii (Sumatran orangutan), this protein is Copine-6.